The chain runs to 427 residues: 3-phosphoshikimate 1-carboxyvinyltransferase (427 aa).

3-phosphoshikimate-binding residues include Lys22, Ser23, and Arg27. A phosphoenolpyruvate-binding site is contributed by Lys22. Residues Gly96 and Arg124 each coordinate phosphoenolpyruvate. Positions 169, 170, 171, 197, 313, 336, and 340 each coordinate 3-phosphoshikimate. Gln171 contributes to the phosphoenolpyruvate binding site. The active-site Proton acceptor is Asp313. Arg344, Arg386, and Lys411 together coordinate phosphoenolpyruvate.

It belongs to the EPSP synthase family. As to quaternary structure, monomer.

Its subcellular location is the cytoplasm. It carries out the reaction 3-phosphoshikimate + phosphoenolpyruvate = 5-O-(1-carboxyvinyl)-3-phosphoshikimate + phosphate. The protein operates within metabolic intermediate biosynthesis; chorismate biosynthesis; chorismate from D-erythrose 4-phosphate and phosphoenolpyruvate: step 6/7. Functionally, catalyzes the transfer of the enolpyruvyl moiety of phosphoenolpyruvate (PEP) to the 5-hydroxyl of shikimate-3-phosphate (S3P) to produce enolpyruvyl shikimate-3-phosphate and inorganic phosphate. This Salmonella choleraesuis (strain SC-B67) protein is 3-phosphoshikimate 1-carboxyvinyltransferase.